An 88-amino-acid chain; its full sequence is Protein MATERNALLY EXPRESSED GENE 2 (88 aa).

The first 27 residues, 1 to 27 (MEYRKRVDALVFFSLLLLGYFAAHAHG), serve as a signal peptide directing secretion. A disulfide bond links cysteine 65 and cysteine 87.

It belongs to the MEG family. Expressed exclusively in endosperm.

The protein is Protein MATERNALLY EXPRESSED GENE 2 (MEG2) of Zea mays (Maize).